The chain runs to 200 residues: V-set and transmembrane domain-containing protein 5 (200 aa).

A signal peptide spans 1–28 (MRPLPSGRRKTRGISLGLFALCLAAARC). Topologically, residues 29 to 147 (LQSQGVSLYI…VSEILYEDLH (119 aa)) are extracellular. The Ig-like C2-type domain occupies 37–139 (YIPQATINAT…QFGTIVLHVS (103 aa)). N-linked (GlcNAc...) asparagine glycosylation is present at Asn102. Residues 148-168 (FVAVILAFLAAVAAVLISLMW) form a helical membrane-spanning segment. At 169–200 (VCNKCAYKFQRKRRHKLKESTTEEIELEDVEC) the chain is on the cytoplasmic side. The segment at 170–186 (CNKCAYKFQRKRRHKLK) is important for CDC42-dependent filopodia induction.

Can homooligomerize through cis interactions within the same cell membrane. Post-translationally, N-glycosylated.

The protein localises to the cell membrane. It localises to the cell projection. The protein resides in the dendrite. It is found in the axon. Functionally, cell adhesion-like membrane protein of the central nervous system (CNS) which modulates both the position and complexity of central neurons by altering their membrane morphology and dynamics. Involved in the formation of neuronal dendrites and protrusions including dendritic filopodia. In synaptogenesis, regulates synapse formation by altering dendritic spine morphology and actin distribution. Promotes formation of unstable neuronal spines such as thin and branched types. Regulates neuronal morphogenesis and migration during cortical development in the brain. This Homo sapiens (Human) protein is V-set and transmembrane domain-containing protein 5 (VSTM5).